Here is a 209-residue protein sequence, read N- to C-terminus: Protease (209 aa).

Residues H55, D72, and C123 contribute to the active site.

It belongs to the peptidase C5 family. In terms of assembly, interacts with protease cofactor pVI-C; this interaction is necessary for protease activation.

It localises to the virion. The protein localises to the host nucleus. It catalyses the reaction Cleaves proteins of the adenovirus and its host cell at two consensus sites: -Yaa-Xaa-Gly-Gly-|-Xaa- and -Yaa-Xaa-Gly-Xaa-|-Gly- (in which Yaa is Met, Ile or Leu, and Xaa is any amino acid).. Requires DNA and protease cofactor for maximal activation. Inside nascent virions, becomes partially activated by binding to the viral DNA, allowing it to cleave the cofactor that binds to the protease and fully activates it. Actin, like the viral protease cofactor, seems to act as a cofactor in the cleavage of cytokeratin 18 and of actin itself. In terms of biological role, cleaves viral precursor proteins (pTP, pIIIa, pVI, pVII, pVIII, and pX) inside newly assembled particles giving rise to mature virions. Protease complexed to its cofactor slides along the viral DNA to specifically locate and cleave the viral precursors. Mature virions have a weakened organization compared to the unmature virions, thereby facilitating subsequent uncoating. Without maturation, the particle lacks infectivity and is unable to uncoat. Late in adenovirus infection, in the cytoplasm, may participate in the cytoskeleton destruction. Cleaves host cell cytoskeletal keratins K7 and K18. The chain is Protease from Human adenovirus D serotype 17 (HAdV-17).